The chain runs to 329 residues: Phosphate acetyltransferase (329 aa).

This sequence belongs to the phosphate acetyltransferase and butyryltransferase family.

The protein resides in the cytoplasm. The enzyme catalyses acetyl-CoA + phosphate = acetyl phosphate + CoA. The protein operates within metabolic intermediate biosynthesis; acetyl-CoA biosynthesis; acetyl-CoA from acetate: step 2/2. The polypeptide is Phosphate acetyltransferase (pta) (Corynebacterium glutamicum (strain ATCC 13032 / DSM 20300 / JCM 1318 / BCRC 11384 / CCUG 27702 / LMG 3730 / NBRC 12168 / NCIMB 10025 / NRRL B-2784 / 534)).